The chain runs to 658 residues: Structure-specific endonuclease subunit SLX1 (658 aa).

The region spanning 12–92 (PFYACYFLRS…AKPHLSRHLK (81 aa)) is the GIY-YIG domain. Disordered stretches follow at residues 29–52 (YIGS…QGAY), 239–269 (GVAE…ETLP), 288–328 (PIPQ…NGVD), and 594–658 (TTSR…IDLT). 2 stretches are compositionally biased toward basic and acidic residues: residues 308–324 (KLSD…HDAE) and 627–640 (SKID…DTKK). The segment covering 641-652 (NTTQKAKSNETS) has biased composition (polar residues).

It belongs to the SLX1 family. Forms a heterodimer with SLX4. The cofactor is a divalent metal cation.

It is found in the nucleus. In terms of biological role, catalytic subunit of the SLX1-SLX4 structure-specific endonuclease that resolves DNA secondary structures generated during DNA repair and recombination. Has endonuclease activity towards branched DNA substrates, introducing single-strand cuts in duplex DNA close to junctions with ss-DNA. The chain is Structure-specific endonuclease subunit SLX1 from Mycosarcoma maydis (Corn smut fungus).